The following is an 86-amino-acid chain: Toxin CSTX-20 (86 aa).

Expressed by the venom gland.

The protein resides in the secreted. The chain is Toxin CSTX-20 from Cupiennius salei (American wandering spider).